The sequence spans 221 residues: ATP phosphoribosyltransferase (221 aa).

This sequence belongs to the ATP phosphoribosyltransferase family. Short subfamily. As to quaternary structure, heteromultimer composed of HisG and HisZ subunits.

The protein resides in the cytoplasm. The catalysed reaction is 1-(5-phospho-beta-D-ribosyl)-ATP + diphosphate = 5-phospho-alpha-D-ribose 1-diphosphate + ATP. It functions in the pathway amino-acid biosynthesis; L-histidine biosynthesis; L-histidine from 5-phospho-alpha-D-ribose 1-diphosphate: step 1/9. Functionally, catalyzes the condensation of ATP and 5-phosphoribose 1-diphosphate to form N'-(5'-phosphoribosyl)-ATP (PR-ATP). Has a crucial role in the pathway because the rate of histidine biosynthesis seems to be controlled primarily by regulation of HisG enzymatic activity. The sequence is that of ATP phosphoribosyltransferase from Carboxydothermus hydrogenoformans (strain ATCC BAA-161 / DSM 6008 / Z-2901).